We begin with the raw amino-acid sequence, 505 residues long: Maturase K (505 aa).

Belongs to the intron maturase 2 family. MatK subfamily.

Its subcellular location is the plastid. It is found in the chloroplast. Usually encoded in the trnK tRNA gene intron. Probably assists in splicing its own and other chloroplast group II introns. This chain is Maturase K, found in Cubanola domingensis.